We begin with the raw amino-acid sequence, 363 residues long: Type-2 angiotensin II receptor (363 aa).

At 1 to 45 (MKDNFSFAATSRNITSSLPFDNLNATGTNESAFNCSHKPADKHLE) the chain is on the extracellular side. N-linked (GlcNAc...) asparagine glycans are attached at residues asparagine 4, asparagine 13, asparagine 24, asparagine 29, and asparagine 34. 2 disulfide bridges follow: cysteine 35–cysteine 290 and cysteine 117–cysteine 195. A helical membrane pass occupies residues 46 to 70 (AIPVLYYMIFVIGFAVNIVVVSLFC). The Cytoplasmic portion of the chain corresponds to 71–80 (CQKGPKKVSS). Residues 81 to 104 (IYIFNLAVADLLLLATLPLWATYY) traverse the membrane as a helical segment. Tyrosine 103 and tyrosine 104 together coordinate angiotensin II. Residues 105–114 (SYRYDWLFGP) lie on the Extracellular side of the membrane. Residues 115 to 140 (VMCKVFGSFLTLNMFASIFFITCMSV) traverse the membrane as a helical segment. The Cytoplasmic segment spans residues 141 to 159 (DRYQSVIYPFLSQRRNPWQ). Residues 160-181 (ASYVVPLVWCMACLSSLPTFYF) traverse the membrane as a helical segment. Residues arginine 182, tyrosine 204, and lysine 215 each coordinate angiotensin II. Over 182 to 206 (RDVRTIEYLGVNACIMAFPPEKYAQ) the chain is Extracellular. Residues 207 to 232 (WSAGIALMKNILGFIIPLIFIATCYF) form a helical membrane-spanning segment. The Cytoplasmic segment spans residues 233–257 (GIRKHLLKTNSYGKNRITRDQVLKM). A helical transmembrane segment spans residues 258 to 281 (AAAVVLAFIICWLPFHVLTFLDAL). Residue aspartate 279 coordinates angiotensin II. At 282 to 294 (TWMGIINSCEVIA) the chain is on the extracellular side. Residues 295-320 (VIDLALPFAILLGFTNSCVNPFLYCF) form a helical membrane-spanning segment. Aspartate 297 provides a ligand contact to angiotensin II. Over 321 to 363 (VGNRFQQKLRSVFRVPITWLQGKRETMSCRKSSSLREMDTFVS) the chain is Cytoplasmic. Positions 324–333 (RFQQKLRSVF) are helix VIII. A Phosphoserine; by PKC modification is found at serine 354.

Belongs to the G-protein coupled receptor 1 family. As to quaternary structure, interacts with MTUS1. As to expression, abundant expression in fetal tissues, immature brain, skin wound and atretic ovarian follicles.

It localises to the cell membrane. Receptor for angiotensin II, a vasoconstricting peptide. Signals primarily via a non-canonical G-protein- and beta-arrestin independent pathways. Cooperates with MTUS1 to inhibit ERK2 activation and cell proliferation. The sequence is that of Type-2 angiotensin II receptor from Rattus norvegicus (Rat).